Reading from the N-terminus, the 160-residue chain is Endoribonuclease YbeY (160 aa).

Residues H121, H125, and H131 each coordinate Zn(2+).

The protein belongs to the endoribonuclease YbeY family. Zn(2+) serves as cofactor.

Its subcellular location is the cytoplasm. In terms of biological role, single strand-specific metallo-endoribonuclease involved in late-stage 70S ribosome quality control and in maturation of the 3' terminus of the 16S rRNA. The polypeptide is Endoribonuclease YbeY (Syntrophus aciditrophicus (strain SB)).